Reading from the N-terminus, the 525-residue chain is GMP synthase [glutamine-hydrolyzing] (525 aa).

The region spanning 9 to 207 (RILILDFGSQ…VRDICQCEAL (199 aa)) is the Glutamine amidotransferase type-1 domain. Cys-86 functions as the Nucleophile in the catalytic mechanism. Catalysis depends on residues His-181 and Glu-183. Residues 208–400 (WTPAKIIDDA…LGLPYDMLYR (193 aa)) form the GMPS ATP-PPase domain. 235–241 (SGGVDSS) contacts ATP.

Homodimer.

It carries out the reaction XMP + L-glutamine + ATP + H2O = GMP + L-glutamate + AMP + diphosphate + 2 H(+). It functions in the pathway purine metabolism; GMP biosynthesis; GMP from XMP (L-Gln route): step 1/1. Functionally, catalyzes the synthesis of GMP from XMP. In Salmonella schwarzengrund (strain CVM19633), this protein is GMP synthase [glutamine-hydrolyzing].